Here is a 319-residue protein sequence, read N- to C-terminus: MVGKMWPVLWTLCAVRVTVDAISVETPQDVLRASQGKSVTLPCTYHTSTSSREGLIQWDKLLLTHTERVVIWPFSNKNYIHGELYKNRVSISNNAEQSDASITIDQLTMADNGTYECSVSLMSDLEGNTKSRVRLLVLVPPSKPECGIEGETIIGNNIQLTCQSKEGSPTPQYSWKRYNILNQEQPLAQPASGQPVSLKNISTDTSGYYICTSSNEEGTQFCNITVAVRSPSMNVALYVGIAVGVVAALIIIGIIIYCCCCRGKDDNTEDKEDARPNREAYEEPPEQLRELSREREEEDDYRQEEQRSTGRESPDHLDQ.

A signal peptide spans 1 to 21; the sequence is MVGKMWPVLWTLCAVRVTVDA. Positions 22-134 constitute an Ig-like V-type domain; it reads ISVETPQDVL…LEGNTKSRVR (113 aa). Residues 22 to 235 lie on the Extracellular side of the membrane; sequence ISVETPQDVL…VAVRSPSMNV (214 aa). Cystine bridges form between Cys-43-Cys-117, Cys-146-Cys-222, and Cys-162-Cys-211. N-linked (GlcNAc...) asparagine glycans are attached at residues Asn-112, Asn-200, and Asn-223. Positions 140–227 constitute an Ig-like C2-type domain; it reads PPSKPECGIE…GTQFCNITVA (88 aa). A helical transmembrane segment spans residues 236–256; the sequence is ALYVGIAVGVVAALIIIGIII. The Cytoplasmic portion of the chain corresponds to 257 to 319; the sequence is YCCCCRGKDD…GRESPDHLDQ (63 aa). Basic and acidic residues-rich tracts occupy residues 267–295 and 303–319; these read NTEDKEDARPNREAYEEPPEQLRELSRER and QEEQRSTGRESPDHLDQ. The tract at residues 267-319 is disordered; the sequence is NTEDKEDARPNREAYEEPPEQLRELSREREEEDDYRQEEQRSTGRESPDHLDQ.

In terms of processing, N-glycosylated, contains approximately 8 kDa of N-linked carbohydrate. Palmitoylated. In terms of tissue distribution, expressed in normal gastrointestinal epithelium and in 95% of colon cancers.

It is found in the membrane. Its function is as follows. May play a role in cell-cell recognition and signaling. The chain is Cell surface A33 antigen (GPA33) from Homo sapiens (Human).